We begin with the raw amino-acid sequence, 305 residues long: GTP cyclohydrolase FolE2 (305 aa).

It belongs to the GTP cyclohydrolase IV family.

The catalysed reaction is GTP + H2O = 7,8-dihydroneopterin 3'-triphosphate + formate + H(+). It functions in the pathway cofactor biosynthesis; 7,8-dihydroneopterin triphosphate biosynthesis; 7,8-dihydroneopterin triphosphate from GTP: step 1/1. In terms of biological role, converts GTP to 7,8-dihydroneopterin triphosphate. The sequence is that of GTP cyclohydrolase FolE2 from Xanthomonas axonopodis pv. citri (strain 306).